The chain runs to 354 residues: Rhodopsin (354 aa).

Topologically, residues 1-36 are extracellular; that stretch reads MNGTEGPYFYIPMVNTTGIVRSPYEYPQYYLVNPAA. Asn2 and Asn15 each carry an N-linked (GlcNAc...) asparagine glycan. A helical membrane pass occupies residues 37–61; sequence YAALGAYMFFLILLGFPINFLTLYV. The Cytoplasmic portion of the chain corresponds to 62 to 73; that stretch reads TLEHKKLRTPLN. Residues 74–96 form a helical membrane-spanning segment; it reads YILLNLAVADLFMVFGGFTTTMY. The Extracellular portion of the chain corresponds to 97-110; that stretch reads TSMHGYFVLGRLGC. Cys110 and Cys187 are disulfide-bonded. The chain crosses the membrane as a helical span at residues 111 to 133; it reads NLEGFFATLGGEIGLWSLVVLAI. A 'Ionic lock' involved in activated form stabilization motif is present at residues 134–136; that stretch reads ERW. Over 134 to 152 the chain is Cytoplasmic; that stretch reads ERWVVVCKPISNFRFGENH. A helical transmembrane segment spans residues 153-173; it reads AIMGLAFTWIMACACAVPPLV. At 174 to 202 the chain is on the extracellular side; the sequence is GWSRYIPEGMQCSCGVDYYTRAEGFNNES. N-linked (GlcNAc...) asparagine glycosylation is present at Asn200. The chain crosses the membrane as a helical span at residues 203 to 224; sequence FVVYMFTCHFCIPLTIIGFCYG. The Cytoplasmic segment spans residues 225-252; it reads RLLCAVKEAAAAQQESETTQRAEREVTR. The helical transmembrane segment at 253 to 274 threads the bilayer; it reads MVILMVVGFLVCWLPYASVAWY. Residues 275 to 286 are Extracellular-facing; it reads IFSNQGSQFGPL. The chain crosses the membrane as a helical span at residues 287 to 308; that stretch reads FMTIPAFFAKSSSVYNPMIYIC. An N6-(retinylidene)lysine modification is found at Lys296. The Cytoplasmic portion of the chain corresponds to 309 to 354; that stretch reads MNKQFRHCMITTLCCGKNPFEEEEGASTTASKTEASSVSSSSVSPA. Residues Cys322 and Cys323 are each lipidated (S-palmitoyl cysteine). The interval 333–354 is disordered; the sequence is GASTTASKTEASSVSSSSVSPA. Residues 334-354 show a composition bias toward low complexity; sequence ASTTASKTEASSVSSSSVSPA.

The protein belongs to the G-protein coupled receptor 1 family. Opsin subfamily. Post-translationally, phosphorylated on some or all of the serine and threonine residues present in the C-terminal region. In terms of processing, contains one covalently linked retinal chromophore.

Its subcellular location is the membrane. It localises to the cell projection. It is found in the cilium. The protein resides in the photoreceptor outer segment. Its function is as follows. Photoreceptor required for image-forming vision at low light intensity. While most salt water fish species use retinal as chromophore, most freshwater fish use 3-dehydroretinal, or a mixture of retinal and 3-dehydroretinal. Light-induced isomerization of 11-cis to all-trans retinal triggers a conformational change that activates signaling via G-proteins. Subsequent receptor phosphorylation mediates displacement of the bound G-protein alpha subunit by arrestin and terminates signaling. This Salaria pavo (Peacock blenny) protein is Rhodopsin (rho).